The chain runs to 913 residues: Protein translocase subunit SecA (913 aa).

Residues glutamine 87, 105-109 (GEGKT), and aspartate 512 contribute to the ATP site. Zn(2+) is bound by residues cysteine 897, cysteine 899, cysteine 908, and histidine 909.

It belongs to the SecA family. Monomer and homodimer. Part of the essential Sec protein translocation apparatus which comprises SecA, SecYEG and auxiliary proteins SecDF-YajC and YidC. It depends on Zn(2+) as a cofactor.

The protein localises to the cell inner membrane. Its subcellular location is the cytoplasm. It carries out the reaction ATP + H2O + cellular proteinSide 1 = ADP + phosphate + cellular proteinSide 2.. Part of the Sec protein translocase complex. Interacts with the SecYEG preprotein conducting channel. Has a central role in coupling the hydrolysis of ATP to the transfer of proteins into and across the cell membrane, serving both as a receptor for the preprotein-SecB complex and as an ATP-driven molecular motor driving the stepwise translocation of polypeptide chains across the membrane. This chain is Protein translocase subunit SecA, found in Pseudomonas fluorescens (strain ATCC BAA-477 / NRRL B-23932 / Pf-5).